The primary structure comprises 679 residues: ATP-dependent zinc metalloprotease FtsH (679 aa).

The Cytoplasmic portion of the chain corresponds to methionine 1–arginine 6. The helical transmembrane segment at asparagine 7 to serine 27 threads the bilayer. Residues aspartate 28–tryptophan 114 are Extracellular-facing. A helical transmembrane segment spans residues valine 115–leucine 135. The Cytoplasmic portion of the chain corresponds to serine 136–glutamate 679. Glycine 206–threonine 213 is a binding site for ATP. Histidine 428 serves as a coordination point for Zn(2+). Glutamate 429 is an active-site residue. Residues histidine 432 and aspartate 504 each contribute to the Zn(2+) site. 2 stretches are compositionally biased toward basic and acidic residues: residues leucine 621 to threonine 642 and proline 658 to glutamate 679. The tract at residues leucine 621–glutamate 679 is disordered.

It in the central section; belongs to the AAA ATPase family. The protein in the C-terminal section; belongs to the peptidase M41 family. As to quaternary structure, homohexamer. It depends on Zn(2+) as a cofactor.

It is found in the cell membrane. Functionally, acts as a processive, ATP-dependent zinc metallopeptidase for both cytoplasmic and membrane proteins. Plays a role in the quality control of integral membrane proteins. The polypeptide is ATP-dependent zinc metalloprotease FtsH (Alkalihalophilus pseudofirmus (strain ATCC BAA-2126 / JCM 17055 / OF4) (Bacillus pseudofirmus)).